The primary structure comprises 365 residues: Peptide chain release factor 2 (365 aa).

Gln-251 carries the post-translational modification N5-methylglutamine.

Belongs to the prokaryotic/mitochondrial release factor family. Post-translationally, methylated by PrmC. Methylation increases the termination efficiency of RF2.

The protein resides in the cytoplasm. In terms of biological role, peptide chain release factor 2 directs the termination of translation in response to the peptide chain termination codons UGA and UAA. The chain is Peptide chain release factor 2 from Sulfurimonas denitrificans (strain ATCC 33889 / DSM 1251) (Thiomicrospira denitrificans (strain ATCC 33889 / DSM 1251)).